Consider the following 117-residue polypeptide: Large ribosomal subunit protein bL20 (117 aa).

This sequence belongs to the bacterial ribosomal protein bL20 family.

Its function is as follows. Binds directly to 23S ribosomal RNA and is necessary for the in vitro assembly process of the 50S ribosomal subunit. It is not involved in the protein synthesizing functions of that subunit. This is Large ribosomal subunit protein bL20 from Citrifermentans bemidjiense (strain ATCC BAA-1014 / DSM 16622 / JCM 12645 / Bem) (Geobacter bemidjiensis).